Reading from the N-terminus, the 261-residue chain is Ribonuclease HII (261 aa).

The RNase H type-2 domain maps to 71–260 (HYIAGVDEVG…LHKYRHNTLL (190 aa)). Positions 77, 78, and 169 each coordinate a divalent metal cation.

It belongs to the RNase HII family. Requires Mn(2+) as cofactor. The cofactor is Mg(2+).

It localises to the cytoplasm. It catalyses the reaction Endonucleolytic cleavage to 5'-phosphomonoester.. Functionally, endonuclease that specifically degrades the RNA of RNA-DNA hybrids. The polypeptide is Ribonuclease HII (Oceanobacillus iheyensis (strain DSM 14371 / CIP 107618 / JCM 11309 / KCTC 3954 / HTE831)).